Reading from the N-terminus, the 114-residue chain is MAKSLRSKWKRKMRAEKRKKNAPKELERLKSILRTGADVVMEEVKEVATVLPAKEALEKQDDCKMDVDNKRNKKTLLDQHGQYPIWMNSRQRKKLKAQRLKGKKKSKLPKGLAW.

Basic residues-rich tracts occupy residues 1 to 21 (MAKS…RKKN) and 91 to 108 (QRKK…KSKL). Disordered stretches follow at residues 1-23 (MAKS…KNAP) and 91-114 (QRKK…GLAW).

This sequence belongs to the learning-associated protein family.

It localises to the nucleus. The protein localises to the nucleolus. Its subcellular location is the chromosome. Regulates dendritic and spine growth and synaptic transmission. This chain is Protein LLP homolog (LLPH), found in Gallus gallus (Chicken).